The chain runs to 637 residues: 1-deoxy-D-xylulose-5-phosphate synthase (637 aa).

Residues His76 and 117–119 each bind thiamine diphosphate; that span reads GHS. Residue Asp148 coordinates Mg(2+). Thiamine diphosphate is bound by residues 149-150, Asn177, Tyr294, and Glu381; that span reads GA. Asn177 serves as a coordination point for Mg(2+).

Belongs to the transketolase family. DXPS subfamily. In terms of assembly, homodimer. It depends on Mg(2+) as a cofactor. Thiamine diphosphate serves as cofactor.

The enzyme catalyses D-glyceraldehyde 3-phosphate + pyruvate + H(+) = 1-deoxy-D-xylulose 5-phosphate + CO2. It participates in metabolic intermediate biosynthesis; 1-deoxy-D-xylulose 5-phosphate biosynthesis; 1-deoxy-D-xylulose 5-phosphate from D-glyceraldehyde 3-phosphate and pyruvate: step 1/1. Its function is as follows. Catalyzes the acyloin condensation reaction between C atoms 2 and 3 of pyruvate and glyceraldehyde 3-phosphate to yield 1-deoxy-D-xylulose-5-phosphate (DXP). In Neisseria gonorrhoeae (strain ATCC 700825 / FA 1090), this protein is 1-deoxy-D-xylulose-5-phosphate synthase.